The following is an 88-amino-acid chain: MKTSPRLSVIDGVGEEVRPDLFQLVHVVPPNTCEPPEQWLRVTVLLVPGLGGLIARDNYPLAGKLHKSALDWHFMWITVAEAEHLAIR.

This is an uncharacterized protein from Gracula (BFDV).